The chain runs to 818 residues: SIT4-associating protein SAP4 (818 aa).

2 disordered regions span residues 33–60 (ETSSTDDKKNEPSMESESEFGTESRDRS) and 499–526 (TSNTLEDKCNNNDSNDSNDNQKQKKNIK). Residues 509-518 (NNDSNDSNDN) are compositionally biased toward low complexity.

Belongs to the SAPS family. In terms of processing, hyperphosphorylated in the absence of SIT4.

Functionally, associates with the SIT4 phosphatase in a cell cycle dependent manner. May be directly or indirectly involved in SIT4-dependent functions in budding and in normal G1 cyclin expression. This Saccharomyces cerevisiae (strain ATCC 204508 / S288c) (Baker's yeast) protein is SIT4-associating protein SAP4 (SAP4).